The chain runs to 325 residues: MKPILLQGHERSITQIKYNREGDLLFTVAKDPIVNVWYSVNGERLGTYMGHTGAVWCVDADWDTKHVLTGSADNSCRLWDCETGKQLALLKTNSAVRTCGFDFGGSIIMFSTDKQMGYQCFVSFFDLRDPSQIDNNEPYMKIPCNDSKITSAVWGPLGECIIAGHESGELNQYSAKSGEVLVNVKEHSRQINDIQLSRDMTMFVTASKDNTAKLFDSTTLEHQKTFRTERPVNSAALSPNYDHVVLGGGQEAMDVTTTSTRIGKFEARFFHLAFEEEFGRVKGHFGLINSVAFHPDGKSYSSGGEDGYVRIHYFDPQYFEFEFEA.

4 WD repeats span residues 8–47 (GHERSITQIKYNREGDLLFTVAKDPIVNVWYSVNGERLGT), 50–91 (GHTG…ALLK), 144–183 (CNDSKITSAVWGPLGECIIAGHESGELNQYSAKSGEVLVN), and 186–225 (EHSRQINDIQLSRDMTMFVTASKDNTAKLFDSTTLEHQKT). At threonine 219 the chain carries Phosphothreonine. Lysine 264 is subject to N6-acetyllysine. Lysine 282 is covalently cross-linked (Glycyl lysine isopeptide (Lys-Gly) (interchain with G-Cter in ubiquitin)). The WD 5 repeat unit spans residues 283 to 324 (GHFGLINSVAFHPDGKSYSSGGEDGYVRIHYFDPQYFEFEFE). A Phosphotyrosine modification is found at tyrosine 308.

The protein belongs to the eIF-3 subunit I family. Component of the eukaryotic translation initiation factor 3 (eIF-3) complex, which is composed of 13 subunits: EIF3A, EIF3B, EIF3C, EIF3D, EIF3E, EIF3F, EIF3G, EIF3H, EIF3I, EIF3J, EIF3K, EIF3L and EIF3M. The eIF-3 complex appears to include 3 stable modules: module A is composed of EIF3A, EIF3B, EIF3G and EIF3I; module B is composed of EIF3F, EIF3H, and EIF3M; and module C is composed of EIF3C, EIF3D, EIF3E, EIF3K and EIF3L. EIF3C of module C binds EIF3B of module A and EIF3H of module B, thereby linking the three modules. EIF3J is a labile subunit that binds to the eIF-3 complex via EIF3B. The eIF-3 complex interacts with RPS6KB1 under conditions of nutrient depletion. Mitogenic stimulation leads to binding and activation of a complex composed of MTOR and RPTOR, leading to phosphorylation and release of RPS6KB1 and binding of EIF4B to eIF-3. Phosphorylated by TGF-beta type II receptor.

It localises to the cytoplasm. In terms of biological role, component of the eukaryotic translation initiation factor 3 (eIF-3) complex, which is required for several steps in the initiation of protein synthesis. The eIF-3 complex associates with the 40S ribosome and facilitates the recruitment of eIF-1, eIF-1A, eIF-2:GTP:methionyl-tRNAi and eIF-5 to form the 43S pre-initiation complex (43S PIC). The eIF-3 complex stimulates mRNA recruitment to the 43S PIC and scanning of the mRNA for AUG recognition. The eIF-3 complex is also required for disassembly and recycling of post-termination ribosomal complexes and subsequently prevents premature joining of the 40S and 60S ribosomal subunits prior to initiation. The eIF-3 complex specifically targets and initiates translation of a subset of mRNAs involved in cell proliferation, including cell cycling, differentiation and apoptosis, and uses different modes of RNA stem-loop binding to exert either translational activation or repression. The polypeptide is Eukaryotic translation initiation factor 3 subunit I (Pongo abelii (Sumatran orangutan)).